Reading from the N-terminus, the 82-residue chain is M-zodatoxin-Lt3a (82 aa).

A signal peptide spans Met-1 to Gly-22. Residues Tyr-23–Arg-61 constitute a propeptide that is removed on maturation. Positions Glu-58 to Arg-61 match the Processing quadruplet motif motif. The residue at position 81 (Ala-81) is an Alanine amide.

Belongs to the cationic peptide 03 (latarcin) family. 03 subfamily. Cleavage of the propeptide depends on the processing quadruplet motif (XXXR, with at least one of X being E). Expressed by the venom gland.

The protein localises to the secreted. Its subcellular location is the target cell membrane. In terms of biological role, it has antimicrobial activity against Gram-positive bacteria (A.globiformis VKM Ac-1112 (MIC=0.3 uM), and B.subtilis VKM B-501 (MIC=1.2 uM)), Gram-negative bacteria (E.coli DH5-alpha (MIC=2.5 uM), E.coli MH1 (MIC=6.0 uM), and P.aeruginosa PAO1 (MIC&gt;40 uM)), and yeasts (P.pastoris GS115 (MIC=20 uM), and S.cerevisiae Y190 (MIC=20 uM)). Causes paralysis, but is not lethal when injected into insect (M.domestica) larvae. A second study reports antibacterial activity against E.coli (MIC=100 uM) and S.aureus (MIC=84 uM). Furthermore, increases efficacy of antibiotics (chloramphenicol, streptomycin, kanamycin, novobiocin) when tested against E.coli, probably by facilitating their incorporation into the bacteria. The chain is M-zodatoxin-Lt3a from Lachesana tarabaevi (Spider).